The primary structure comprises 115 residues: NADH-ubiquinone oxidoreductase chain 3 (115 aa).

The next 3 membrane-spanning stretches (helical) occupy residues 3–23, 55–75, and 84–104; these read LIMT…IAFW, FFLV…LLPL, and LTTM…SLAY.

Belongs to the complex I subunit 3 family. As to quaternary structure, core subunit of respiratory chain NADH dehydrogenase (Complex I) which is composed of 45 different subunits. Interacts with TMEM186. Interacts with TMEM242.

It localises to the mitochondrion inner membrane. The enzyme catalyses a ubiquinone + NADH + 5 H(+)(in) = a ubiquinol + NAD(+) + 4 H(+)(out). In terms of biological role, core subunit of the mitochondrial membrane respiratory chain NADH dehydrogenase (Complex I) which catalyzes electron transfer from NADH through the respiratory chain, using ubiquinone as an electron acceptor. Essential for the catalytic activity of complex I. This chain is NADH-ubiquinone oxidoreductase chain 3, found in Ailurus fulgens (Himalayan red panda).